The following is a 338-amino-acid chain: 2,3-dihydroxybenzoate decarboxylase (338 aa).

Cys251 is a catalytic residue.

It belongs to the metallo-dependent hydrolases superfamily. In terms of assembly, homotetramer.

It catalyses the reaction 2,3-dihydroxybenzoate + H(+) = catechol + CO2. It functions in the pathway aromatic compound metabolism; benzoate degradation via hydroxylation. Has an absolute substrate specificity for 2,3-DHBA. The sequence is that of 2,3-dihydroxybenzoate decarboxylase from Aspergillus oryzae (strain ATCC 42149 / RIB 40) (Yellow koji mold).